The chain runs to 103 residues: Small ribosomal subunit protein uS10 (103 aa).

Belongs to the universal ribosomal protein uS10 family. In terms of assembly, part of the 30S ribosomal subunit.

Involved in the binding of tRNA to the ribosomes. This chain is Small ribosomal subunit protein uS10, found in Laribacter hongkongensis (strain HLHK9).